We begin with the raw amino-acid sequence, 222 residues long: Eukaryotic translation initiation factor 3 subunit K (222 aa).

In terms of domain architecture, PCI spans 46 to 208 (YDLEANLAVL…KIKTKNITEK (163 aa)).

This sequence belongs to the eIF-3 subunit K family. Component of the eukaryotic translation initiation factor 3 (eIF-3) complex. The eIF-3 complex interacts with pix.

The protein localises to the cytoplasm. Its function is as follows. Component of the eukaryotic translation initiation factor 3 (eIF-3) complex, which is involved in protein synthesis of a specialized repertoire of mRNAs and, together with other initiation factors, stimulates binding of mRNA and methionyl-tRNAi to the 40S ribosome. The eIF-3 complex specifically targets and initiates translation of a subset of mRNAs involved in cell proliferation. The sequence is that of Eukaryotic translation initiation factor 3 subunit K from Drosophila yakuba (Fruit fly).